The following is a 179-amino-acid chain: Cytochrome b6-f complex iron-sulfur subunit 1 (179 aa).

The chain crosses the membrane as a helical span at residues 21 to 43 (LLTFGTVTGVALGALYPVVNYFI). The Rieske domain maps to 61 to 162 (GNDVSVSKFL…AKTENDKIVL (102 aa)). [2Fe-2S] cluster is bound by residues C108, H110, C126, and H129. C113 and C128 form a disulfide bridge.

Belongs to the Rieske iron-sulfur protein family. The 4 large subunits of the cytochrome b6-f complex are cytochrome b6, subunit IV (17 kDa polypeptide, PetD), cytochrome f and the Rieske protein, while the 4 small subunits are PetG, PetL, PetM and PetN. The complex functions as a dimer. [2Fe-2S] cluster serves as cofactor.

The protein resides in the cellular thylakoid membrane. It carries out the reaction 2 oxidized [plastocyanin] + a plastoquinol + 2 H(+)(in) = 2 reduced [plastocyanin] + a plastoquinone + 4 H(+)(out). Component of the cytochrome b6-f complex, which mediates electron transfer between photosystem II (PSII) and photosystem I (PSI), cyclic electron flow around PSI, and state transitions. This Trichormus variabilis (strain ATCC 29413 / PCC 7937) (Anabaena variabilis) protein is Cytochrome b6-f complex iron-sulfur subunit 1.